Consider the following 606-residue polypeptide: MWLICMAALFDMLYCSEVEESMERIFEMLHGACGLETEEMRGVLKRMSDFRTYVLFPLILHDDKLVVSPDMGYKDIEKEERIYVEKIIKKLPSLVWQSMVFLYIPEHDNWILGLMNTVFDTSSSRFSDSVGIYKKSRGRSEMRLVDLMMGMFRNNVSMMEKFGRGLAHKAEVKMKEIPNEISKEEREKQKEVLDKIREYGKSLGTREKQEQILKAQEIVFDTCIYLWRREEDRISFVLKVYLRSLQCKMLGLNKGALADDVNQEVSLLHSISHEILINTHNEYGIEVTAELIKRLFLEYMNIDEEYVSNVVEDVKKKKEEERREEEEEKKRKEEVVQRNVEELLRGEEEEKKGAKAKRKSKKKKKGSKKPEEKESEVEEVSENREAQEMEDSREACSKERNKEQKNESGRCYYKLHKRTLLWREEPEKIKKKWDSGTEERWKGKSIGEIREQKELHDISEISQLLKSQDANNFFICTGEYMKNGIKRWKMVAIAVLETRDWKKLGVVEVGLFKDKDEQNVIFHLMFRPTDLGRAGAVVRSALAKVDNMEKVDDTDDSLDISGFTYPKNTRSEVVRGLNEFRVVWRNPKNTAEVIRSLTVMSRPGGN.

Residues 317-401 (KKEEERREEE…SREACSKERN (85 aa)) are disordered. Residues 328-353 (EKKRKEEVVQRNVEELLRGEEEEKKG) show a composition bias toward basic and acidic residues. The segment covering 354–367 (AKAKRKSKKKKKGS) has biased composition (basic residues). Residues 381–401 (SENREAQEMEDSREACSKERN) are compositionally biased toward basic and acidic residues.

The protein belongs to the UPF0329 family.

This chain is UPF0329 protein ECU06_0090, found in Encephalitozoon cuniculi (strain GB-M1) (Microsporidian parasite).